A 304-amino-acid chain; its full sequence is Urease accessory protein UreD 2 (304 aa).

The protein belongs to the UreD family. In terms of assembly, ureD, UreF and UreG form a complex that acts as a GTP-hydrolysis-dependent molecular chaperone, activating the urease apoprotein by helping to assemble the nickel containing metallocenter of UreC. The UreE protein probably delivers the nickel.

The protein resides in the cytoplasm. Required for maturation of urease via the functional incorporation of the urease nickel metallocenter. Its function is as follows. Disrupting the ure2 operon has no effect on urease activity or pathogen survival in BALB/c mice when administered orally. This is Urease accessory protein UreD 2 from Brucella abortus (strain 2308).